Consider the following 265-residue polypeptide: S-acyl fatty acid synthase thioesterase, medium chain (265 aa).

M1 is subject to N-acetylmethionine. Active-site residues include S101 and H237.

It belongs to the thioesterase family. Interacts (via C-terminus) with FASN. Detected both in lactating and non-lactating breast epithelium (at protein level). Isoform 2 is up-regulated in bone marrow-derived mononuclear cells of rheumatoid arthritis patients.

The protein resides in the cytoplasm. Its subcellular location is the cytosol. It carries out the reaction (9Z)-octadecenoyl-[ACP] + H2O = (9Z)-octadecenoate + holo-[ACP] + H(+). It catalyses the reaction decanoyl-CoA + H2O = decanoate + CoA + H(+). The catalysed reaction is dodecanoyl-CoA + H2O = dodecanoate + CoA + H(+). The enzyme catalyses tetradecanoyl-CoA + H2O = tetradecanoate + CoA + H(+). It carries out the reaction hexadecanoyl-CoA + H2O = hexadecanoate + CoA + H(+). Contributes to the release of free fatty acids from fatty acid synthase (FASN). Has broad substrate specificity, giving rise to a range of free fatty acids with chain lengths between 10 and 16 carbon atoms (C10 - C16). This chain is S-acyl fatty acid synthase thioesterase, medium chain, found in Homo sapiens (Human).